The following is a 350-amino-acid chain: MASTGSQASDIDEIFGFFSDGAPPTKKPRKLLPSLKTKKPRELVLVIGTGISAAVAPQVPALKSWKGLIQALLDAAIDFDLLEDEESKKFQKCLHEDKNLVHVAHDLIQKLSPRTSNVRSTFFKDCLYEVFDDLESKMEDSGKQLLQSVLHLMENGALVLTTNFDNLLELYAADQGKQLESLDLTDEKKVLEWAQEKRKLSVLHIHGVYTNPSGIVLHPAGYQNVLRNTEVMREIQKLYENKSFLFLGCGWTVDDTTFQALFLEAVKHKSDLEHFMLVRRGDVDEFKKLRENMLDKGIKVISYGNDYADLPEYFKRLTCEISTRGRSGMVREGQLNGSSAAHSEIRGCST.

Ala2 carries the N-acetylalanine modification. At Ser9 the chain carries Phosphoserine.

Belongs to the FAM118 family.

The protein localises to the nucleus. It localises to the cajal body. Its function is as follows. May play a role in Cajal bodies formation. The sequence is that of Protein FAM118B (FAM118B) from Macaca fascicularis (Crab-eating macaque).